The following is a 470-amino-acid chain: MKFGHDFKRALENDMPPGWGEAAIQYKALKKCIKRFVFELSSLGLSAETISKLMAPTTVDPQQAITLSYSLGKEGHIVVPKIIINVNFDKLKTDKFAASMFKQLNASNMITTVRSNYASNVPSTPSDSTQQPPTNTLPSVSASSQSVETCETVDEDIDTQTMSSDMSEVQSMEISLNCDHEFFEKLTSELQSVEGLQREQRKILFNAIDILSHEISLIASPNSKKKYKSLYCWRKIFEIYMDSDIFISCKEADQSHERTPELAERHLKWFDDQVRLAKCLPSSSKHRDRILYAKFLELNESLLKVASFQQMNKLAVTKIMKKFDKRTSLTAQPLFFQVIESDPLLLVDNASKAICFSLSSKLFSIIPQLRDFECAICSNVAYKPVRLGCSHVFCLHCLIILQKQKVDFCPLCRAKEVMKADSRNIDHALMNFMKTYFPREIKEKFEENENDTFTPSSISVVSGQNNCVIM.

The SPX domain occupies 1 to 337; sequence MKFGHDFKRA…SLTAQPLFFQ (337 aa). Residues 118–145 form a disordered region; that stretch reads ASNVPSTPSDSTQQPPTNTLPSVSASSQ. The segment covering 122-136 has biased composition (low complexity); the sequence is PSTPSDSTQQPPTNT. The segment at 374–413 adopts an RING-type zinc-finger fold; the sequence is CAICSNVAYKPVRLGCSHVFCLHCLIILQKQKVDFCPLCR.

Its subcellular location is the cytoplasm. This is an uncharacterized protein from Schizosaccharomyces pombe (strain 972 / ATCC 24843) (Fission yeast).